The chain runs to 119 residues: Large ribosomal subunit protein bL20 (119 aa).

The protein belongs to the bacterial ribosomal protein bL20 family.

Functionally, binds directly to 23S ribosomal RNA and is necessary for the in vitro assembly process of the 50S ribosomal subunit. It is not involved in the protein synthesizing functions of that subunit. This Saccharophagus degradans (strain 2-40 / ATCC 43961 / DSM 17024) protein is Large ribosomal subunit protein bL20.